A 234-amino-acid polypeptide reads, in one-letter code: Sugar fermentation stimulation protein homolog (234 aa).

It belongs to the SfsA family.

This Pectobacterium carotovorum subsp. carotovorum (strain PC1) protein is Sugar fermentation stimulation protein homolog.